The sequence spans 98 residues: NADH-ubiquinone oxidoreductase chain 4L (98 aa).

Helical transmembrane passes span 1–21, 29–49, and 59–79; these read MTLI…GFLM, ALLC…LTVL, and MPII…ALLV.

Belongs to the complex I subunit 4L family. Core subunit of respiratory chain NADH dehydrogenase (Complex I) which is composed of 45 different subunits.

It is found in the mitochondrion inner membrane. It carries out the reaction a ubiquinone + NADH + 5 H(+)(in) = a ubiquinol + NAD(+) + 4 H(+)(out). In terms of biological role, core subunit of the mitochondrial membrane respiratory chain NADH dehydrogenase (Complex I) which catalyzes electron transfer from NADH through the respiratory chain, using ubiquinone as an electron acceptor. Part of the enzyme membrane arm which is embedded in the lipid bilayer and involved in proton translocation. This chain is NADH-ubiquinone oxidoreductase chain 4L (MT-ND4L), found in Inia geoffrensis (Amazon river dolphin).